The sequence spans 51 residues: Large ribosomal subunit protein bL33 (51 aa).

This sequence belongs to the bacterial ribosomal protein bL33 family.

This Hahella chejuensis (strain KCTC 2396) protein is Large ribosomal subunit protein bL33.